An 824-amino-acid polypeptide reads, in one-letter code: Leucine--tRNA ligase (824 aa).

The 'HIGH' region signature appears at 42–52 (PYPSGRIHMGH). The 'KMSKS' region motif lies at 581-585 (KMSKS). K584 serves as a coordination point for ATP.

The protein belongs to the class-I aminoacyl-tRNA synthetase family.

The protein resides in the cytoplasm. It catalyses the reaction tRNA(Leu) + L-leucine + ATP = L-leucyl-tRNA(Leu) + AMP + diphosphate. The chain is Leucine--tRNA ligase from Geotalea daltonii (strain DSM 22248 / JCM 15807 / FRC-32) (Geobacter daltonii).